We begin with the raw amino-acid sequence, 236 residues long: UPF0502 protein Bxeno_B1639 (236 aa).

Belongs to the UPF0502 family.

The protein is UPF0502 protein Bxeno_B1639 of Paraburkholderia xenovorans (strain LB400).